The following is a 349-amino-acid chain: GTPase Obg (349 aa).

The Obg domain occupies 1–159; that stretch reads MKFLDEAKVY…RWIWLRLKLI (159 aa). Positions 160-327 constitute an OBG-type G domain; it reads ADAGLVGLPN…ALRALVEVIG (168 aa). GTP-binding positions include 166–173, 191–195, 212–215, 279–282, and 308–310; these read GLPNAGKS, FTTLH, DIPG, NKID, and SGV. Mg(2+) is bound by residues S173 and T193.

The protein belongs to the TRAFAC class OBG-HflX-like GTPase superfamily. OBG GTPase family. In terms of assembly, monomer. Requires Mg(2+) as cofactor.

The protein resides in the cytoplasm. Its function is as follows. An essential GTPase which binds GTP, GDP and possibly (p)ppGpp with moderate affinity, with high nucleotide exchange rates and a fairly low GTP hydrolysis rate. Plays a role in control of the cell cycle, stress response, ribosome biogenesis and in those bacteria that undergo differentiation, in morphogenesis control. This is GTPase Obg from Rhodopseudomonas palustris (strain BisB18).